A 392-amino-acid chain; its full sequence is Metacaspase-1 (392 aa).

The segment covering 1–14 (MYPGSGNYSYNNRP) has biased composition (polar residues). Residues 1–87 (MYPGSGNYSY…PSSIQQGNGQ (87 aa)) are disordered. Low complexity predominate over residues 41–51 (QQQQYQDQYQG). Over residues 53 to 63 (NRGQYQGQYQD) the composition is skewed to polar residues. Catalysis depends on residues histidine 182 and cysteine 238.

This sequence belongs to the peptidase C14B family.

Involved in cell death (apoptosis). The polypeptide is Metacaspase-1 (MCA1) (Candida glabrata (strain ATCC 2001 / BCRC 20586 / JCM 3761 / NBRC 0622 / NRRL Y-65 / CBS 138) (Yeast)).